We begin with the raw amino-acid sequence, 291 residues long: 4-diphosphocytidyl-2-C-methyl-D-erythritol kinase (291 aa).

Residue Lys21 is part of the active site. 104 to 114 (PMGGGLGGGSS) is a binding site for ATP. The active site involves Asp146.

It belongs to the GHMP kinase family. IspE subfamily.

It carries out the reaction 4-CDP-2-C-methyl-D-erythritol + ATP = 4-CDP-2-C-methyl-D-erythritol 2-phosphate + ADP + H(+). It participates in isoprenoid biosynthesis; isopentenyl diphosphate biosynthesis via DXP pathway; isopentenyl diphosphate from 1-deoxy-D-xylulose 5-phosphate: step 3/6. In terms of biological role, catalyzes the phosphorylation of the position 2 hydroxy group of 4-diphosphocytidyl-2C-methyl-D-erythritol. This is 4-diphosphocytidyl-2-C-methyl-D-erythritol kinase from Methylococcus capsulatus (strain ATCC 33009 / NCIMB 11132 / Bath).